The chain runs to 186 residues: Protein Syd (186 aa).

It belongs to the Syd family.

It is found in the cell inner membrane. In terms of biological role, interacts with the SecY protein in vivo. May bind preferentially to an uncomplexed state of SecY, thus functioning either as a chelating agent for excess SecY in the cell or as a regulatory factor that negatively controls the translocase function. This is Protein Syd from Pseudoalteromonas atlantica (strain T6c / ATCC BAA-1087).